Here is a 342-residue protein sequence, read N- to C-terminus: Probable endoglucanase (342 aa).

An N-terminal signal peptide occupies residues Met-1–Ala-20. The Proton donor role is filled by Glu-57. The active-site Nucleophile is Asp-114.

It belongs to the glycosyl hydrolase 8 (cellulase D) family.

Its subcellular location is the secreted. The enzyme catalyses Endohydrolysis of (1-&gt;4)-beta-D-glucosidic linkages in cellulose, lichenin and cereal beta-D-glucans.. Functionally, enzyme capable of hydrolyzing carboxy-methyl-cellulose (CMC). This Novacetimonas hansenii (Komagataeibacter hansenii) protein is Probable endoglucanase (cmcAX).